A 191-amino-acid polypeptide reads, in one-letter code: Protein GrpE (191 aa).

The segment covering 1–19 (MKDEHNQKHDHLSQKEPES) has biased composition (basic and acidic residues). Residues 1-44 (MKDEHNQKHDHLSQKEPESYQKACACKEQQDEEMQEAGEKEGEI) form a disordered region.

It belongs to the GrpE family. As to quaternary structure, homodimer.

The protein localises to the cytoplasm. Functionally, participates actively in the response to hyperosmotic and heat shock by preventing the aggregation of stress-denatured proteins, in association with DnaK and GrpE. It is the nucleotide exchange factor for DnaK and may function as a thermosensor. Unfolded proteins bind initially to DnaJ; upon interaction with the DnaJ-bound protein, DnaK hydrolyzes its bound ATP, resulting in the formation of a stable complex. GrpE releases ADP from DnaK; ATP binding to DnaK triggers the release of the substrate protein, thus completing the reaction cycle. Several rounds of ATP-dependent interactions between DnaJ, DnaK and GrpE are required for fully efficient folding. The sequence is that of Protein GrpE from Helicobacter pylori (strain G27).